A 248-amino-acid polypeptide reads, in one-letter code: MFSLALRARATGLAAQWGRHARNLHKTAVHNGAGGALFVHRDTPENNPDTPFDFTPENYKRIEAIVKNYPEGHQAAAVLPVLDLAQRQNGWLPISAMNKVAEVLQVPPMRVYEVATFYTMYNRKPVGKYHIQVCTTTPCMLRDSDSILETLQRKLGIKVGETTPDKLFTLIEVECLGACVNAPMVQINDNYYEDLTPKDIEEIIDELKAGKVPKPGPRSGRFCCEPAGGLTSLTEPPKGPGFGVQAGL.

Residues 1 to 31 constitute a mitochondrion transit peptide; that stretch reads MFSLALRARATGLAAQWGRHARNLHKTAVHN. Lys60 bears the N6-acetyllysine mark. Residues Cys134, Cys139, Cys175, and Cys179 each coordinate [2Fe-2S] cluster. Tyr192 carries the phosphotyrosine; by SRC modification. The interval 229–248 is disordered; it reads GLTSLTEPPKGPGFGVQAGL.

This sequence belongs to the complex I 24 kDa subunit family. As to quaternary structure, core subunit of respiratory chain NADH dehydrogenase (Complex I) which is composed of 45 different subunits. This is a component of the flavoprotein-sulfur (FP) fragment of the enzyme. It depends on [2Fe-2S] cluster as a cofactor.

The protein localises to the mitochondrion inner membrane. It catalyses the reaction a ubiquinone + NADH + 5 H(+)(in) = a ubiquinol + NAD(+) + 4 H(+)(out). Functionally, core subunit of the mitochondrial membrane respiratory chain NADH dehydrogenase (Complex I) which catalyzes electron transfer from NADH through the respiratory chain, using ubiquinone as an electron acceptor. Parts of the peripheral arm of the enzyme, where the electrons from NADH are accepted by flavin mononucleotide (FMN) and then passed along a chain of iron-sulfur clusters by electron tunnelling to the final acceptor ubiquinone. Contains one iron-sulfur cluster. This chain is NADH dehydrogenase [ubiquinone] flavoprotein 2, mitochondrial, found in Mus musculus (Mouse).